The sequence spans 478 residues: Membrane-bound lytic murein transglycosylase F (478 aa).

Positions 1 to 22 are cleaved as a signal peptide; that stretch reads MTRFLFAIILGFLLTACQQVTV. The non-LT domain stretch occupies residues 23-257; it reads EETEYVPHKL…HLNEKYFGHV (235 aa). The segment at 258–478 is LT domain; sequence KRFDYIDTRA…PGTLSPDKPK (221 aa). Residue glutamate 302 is part of the active site. A disordered region spans residues 446–478; sequence SKQQNSDEEEPSDLASEDGPAPVPGTLSPDKPK. A compositionally biased stretch (acidic residues) spans 451 to 461; sequence SDEEEPSDLAS.

In the N-terminal section; belongs to the bacterial solute-binding protein 3 family. It in the C-terminal section; belongs to the transglycosylase Slt family.

The protein resides in the cell outer membrane. The catalysed reaction is Exolytic cleavage of the (1-&gt;4)-beta-glycosidic linkage between N-acetylmuramic acid (MurNAc) and N-acetylglucosamine (GlcNAc) residues in peptidoglycan, from either the reducing or the non-reducing ends of the peptidoglycan chains, with concomitant formation of a 1,6-anhydrobond in the MurNAc residue.. Its function is as follows. Murein-degrading enzyme that degrades murein glycan strands and insoluble, high-molecular weight murein sacculi, with the concomitant formation of a 1,6-anhydromuramoyl product. Lytic transglycosylases (LTs) play an integral role in the metabolism of the peptidoglycan (PG) sacculus. Their lytic action creates space within the PG sacculus to allow for its expansion as well as for the insertion of various structures such as secretion systems and flagella. The chain is Membrane-bound lytic murein transglycosylase F from Shewanella sp. (strain MR-4).